The primary structure comprises 432 residues: Cytoplasmic 60S subunit biogenesis factor REH1 (432 aa).

The segment at 6-30 (FTCNCCVIQFKTSDLQRYHMKTEWH) adopts a C2H2-type 1 zinc-finger fold. Positions 79–150 (QSNALPQKQK…NTDYGEDTVS (72 aa)) are disordered. A compositionally biased stretch (basic residues) spans 86–98 (KQKKPIKSKRGRK). Residues 105–117 (KRKDRDIAKEKQN) show a composition bias toward basic and acidic residues. Positions 118 to 143 (RSVSPSGSISSQLSNLTVGTENTNTD) are enriched in polar residues. 2 C2H2-type zinc fingers span residues 186 to 209 (TECIYCGKDNKEVERNVKHMFSEH) and 237 to 261 (HNCLCCNFHGSGLESIRAHMASKRH).

This sequence belongs to the REI1 family. Associates with nascent pre-60S particles that have not yet entered the translating pool, and is released from mature 60S subunits. Interacts with pre-60S factors NMD3, LSG1, and TIF6.

Its subcellular location is the cytoplasm. Functionally, pre-60S-associated cytoplasmic factor involved in the cytoplasmic maturation of the 60S subunit. May act redundantly with REI1 to directly promote a stabilizing structural rearrangement in cytoplasmic 60S subunit maturation independent on the REI1-specific ARX1 recycling. The protein is Cytoplasmic 60S subunit biogenesis factor REH1 (REH1) of Saccharomyces cerevisiae (strain ATCC 204508 / S288c) (Baker's yeast).